We begin with the raw amino-acid sequence, 633 residues long: Probable potassium transport system protein Kup 2 (633 aa).

The next 12 helical transmembrane spans lie at 18 to 38, 61 to 81, 109 to 129, 145 to 165, 173 to 193, 211 to 231, 255 to 275, 287 to 307, 345 to 365, 371 to 391, 405 to 425, and 427 to 447; these read FLAMTIGAIGVVYGDIGTSPL, LISLMLWTLTIIVTFKYVLFL, LMFMAGILGAALFIGDAMITP, PAFHDYVLPISVGIMVLLFAV, VSIFFGPITLIWFLVLGAAGV, AVTFLWNAGFVGFIVLGAVFL, WFAVVFPALTLNYLGQGALVL, LMFPNWALLPVVLLATAATII, IYLPFVNNALLAGVIVLMFMF, LATAYGISVTGAMVVTTVLAF, ATAVLLPLLVLELFFLGANLF, and IHDGGYVPILIAGTLMTTMWT.

The protein belongs to the HAK/KUP transporter (TC 2.A.72) family.

It is found in the cell inner membrane. The enzyme catalyses K(+)(in) + H(+)(in) = K(+)(out) + H(+)(out). Transport of potassium into the cell. Likely operates as a K(+):H(+) symporter. This chain is Probable potassium transport system protein Kup 2, found in Sinorhizobium medicae (strain WSM419) (Ensifer medicae).